Here is a 236-residue protein sequence, read N- to C-terminus: Pyridoxine 5'-phosphate synthase (236 aa).

3-amino-2-oxopropyl phosphate is bound at residue Asn-6. Residue 8 to 9 (DH) coordinates 1-deoxy-D-xylulose 5-phosphate. Arg-17 lines the 3-amino-2-oxopropyl phosphate pocket. His-42 (proton acceptor) is an active-site residue. 1-deoxy-D-xylulose 5-phosphate contacts are provided by Arg-44 and His-49. The active-site Proton acceptor is the Glu-69. Thr-99 lines the 1-deoxy-D-xylulose 5-phosphate pocket. His-190 serves as the catalytic Proton donor. 3-amino-2-oxopropyl phosphate is bound by residues Gly-191 and 212 to 213 (GH).

The protein belongs to the PNP synthase family. As to quaternary structure, homooctamer; tetramer of dimers.

It is found in the cytoplasm. The enzyme catalyses 3-amino-2-oxopropyl phosphate + 1-deoxy-D-xylulose 5-phosphate = pyridoxine 5'-phosphate + phosphate + 2 H2O + H(+). Its pathway is cofactor biosynthesis; pyridoxine 5'-phosphate biosynthesis; pyridoxine 5'-phosphate from D-erythrose 4-phosphate: step 5/5. Its function is as follows. Catalyzes the complicated ring closure reaction between the two acyclic compounds 1-deoxy-D-xylulose-5-phosphate (DXP) and 3-amino-2-oxopropyl phosphate (1-amino-acetone-3-phosphate or AAP) to form pyridoxine 5'-phosphate (PNP) and inorganic phosphate. The protein is Pyridoxine 5'-phosphate synthase of Prosthecochloris aestuarii (strain DSM 271 / SK 413).